The chain runs to 368 residues: MFKRSLIAASLSVAALVSAQAMAVTGGGASLPAELYKGSADSILPANFSYAVTGSGTGKNAFLTNNSSLFGTTGTVHYAGSDSVLSGSELTTYNSNYNGTYGPLIQIPSVATSVTVPYRKDGNTTLNLTSAQLCDAFSGAKTTWGQLLGTTDSTPIRIVYRTGSSGTTELFTRHLNSICPTRFATNSTFTNARLPAGGTLPSNWVGVAATSTVVSTVKATNGSLGYVSPDAVNINSNAEVSRVNGNLPTQANVSTALGSVAPPANAADRADPSKWVPVFTNPSAGYSIVGYTNFVFGQCYKDASVSTDVRAFINKHYGGTTTNAAVAAHGFIPLTPAWKSAIVSAFYTGTSENLAIGNTNVCNTKGRP.

A signal peptide spans 1 to 23 (MFKRSLIAASLSVAALVSAQAMA).

The protein belongs to the PstS family. In terms of assembly, homodimer.

Its subcellular location is the secreted. The protein resides in the periplasm. It carries out the reaction a phosphate monoester + H2O = an alcohol + phosphate. Functionally, has both a phosphomonoesterase and phosphodiesterase activity. In Pseudomonas aeruginosa (strain ATCC 15692 / DSM 22644 / CIP 104116 / JCM 14847 / LMG 12228 / 1C / PRS 101 / PAO1), this protein is Alkaline phosphatase L.